Reading from the N-terminus, the 465-residue chain is Histidine--tRNA ligase (465 aa).

It belongs to the class-II aminoacyl-tRNA synthetase family. In terms of assembly, homodimer.

The protein localises to the cytoplasm. The catalysed reaction is tRNA(His) + L-histidine + ATP = L-histidyl-tRNA(His) + AMP + diphosphate + H(+). This Pelagibacter ubique (strain HTCC1062) protein is Histidine--tRNA ligase (hisS).